Reading from the N-terminus, the 421-residue chain is Gamma-glutamyl phosphate reductase (421 aa).

It belongs to the gamma-glutamyl phosphate reductase family.

It localises to the cytoplasm. It catalyses the reaction L-glutamate 5-semialdehyde + phosphate + NADP(+) = L-glutamyl 5-phosphate + NADPH + H(+). It participates in amino-acid biosynthesis; L-proline biosynthesis; L-glutamate 5-semialdehyde from L-glutamate: step 2/2. In terms of biological role, catalyzes the NADPH-dependent reduction of L-glutamate 5-phosphate into L-glutamate 5-semialdehyde and phosphate. The product spontaneously undergoes cyclization to form 1-pyrroline-5-carboxylate. The polypeptide is Gamma-glutamyl phosphate reductase (Erythrobacter litoralis (strain HTCC2594)).